A 394-amino-acid chain; its full sequence is Ceramide glucosyltransferase (394 aa).

Topologically, residues Met-1–Gly-10 are lumenal. The chain crosses the membrane as a helical span at residues Leu-11–Tyr-32. Residues Thr-33–Arg-195 lie on the Cytoplasmic side of the membrane. Asp-92 is a short sequence motif (D1). Residue Asp-144 is a short sequence motif, D2. Residues Ser-196–Met-215 traverse the membrane as a helical segment. Topologically, residues Arg-216 to Thr-287 are lumenal. Asp-236 is a short sequence motif (D3). Residue Asp-236 is the Proton acceptor of the active site. Residues Arg-272–Trp-276 carry the (Q/R)XXRW motif. A helical transmembrane segment spans residues Ile-288–Gly-304. At Trp-305–His-309 the chain is on the cytoplasmic side. Residues Ile-310–Ile-328 form a helical membrane-spanning segment. Residues Phe-329 to Asp-348 lie on the Lumenal side of the membrane. The chain crosses the membrane as a helical span at residues Tyr-349–Trp-369. Residues Asp-370–Val-394 lie on the Cytoplasmic side of the membrane.

It belongs to the glycosyltransferase 2 family.

It localises to the golgi apparatus membrane. The enzyme catalyses an N-acylsphing-4-enine + UDP-alpha-D-glucose = a beta-D-glucosyl-(1&lt;-&gt;1')-N-acylsphing-4-enine + UDP + H(+). The catalysed reaction is UDP-alpha-D-xylose + an N-acylsphing-4-enine = a beta-D-xylosyl-(1&lt;-&gt;1')-N-acylsphing-4-enine + UDP + H(+). It carries out the reaction N-(9Z-octadecenoyl)-sphing-4-enine + UDP-alpha-D-xylose = beta-D-xylosyl-(1&lt;-&gt;1')-N-(9Z-octadecenoyl)-sphing-4-enine + UDP + H(+). The protein operates within lipid metabolism; sphingolipid metabolism. Its function is as follows. Participates in the initial step of the glucosylceramide-based glycosphingolipid/GSL synthetic pathway at the cytosolic surface of the Golgi. Catalyzes the transfer of glucose from UDP-glucose to ceramide to produce glucosylceramide/GlcCer (such as beta-D-glucosyl-(1&lt;-&gt;1')-N-acylsphing-4-enine). Glucosylceramide is the core component of glycosphingolipids/GSLs, amphipathic molecules consisting of a ceramide lipid moiety embedded in the outer leaflet of the membrane, linked to one of hundreds of different externally oriented oligosaccharide structures. Glycosphingolipids are essential components of membrane microdomains that mediate membrane trafficking and signal transduction. They are implicated in many fundamental cellular processes, including growth, differentiation, migration, morphogenesis, cell-to-cell and cell-to-matrix interactions. Catalyzes the synthesis of xylosylceramide/XylCer (such as beta-D-xylosyl-(1&lt;-&gt;1')-N-acylsphing-4-enine) using UDP-Xyl as xylose donor. This Xenopus tropicalis (Western clawed frog) protein is Ceramide glucosyltransferase (ugcg).